We begin with the raw amino-acid sequence, 187 residues long: UPF0301 protein YPO0936/y3322/YP_3506 (187 aa).

This sequence belongs to the UPF0301 (AlgH) family.

In Yersinia pestis, this protein is UPF0301 protein YPO0936/y3322/YP_3506.